A 1292-amino-acid polypeptide reads, in one-letter code: SH3 and multiple ankyrin repeat domains protein 2 (1292 aa).

In terms of domain architecture, PDZ spans 56 to 150 (TVVLQKKDNE…HLVLKVVTVT (95 aa)). Disordered stretches follow at residues 155–176 (PDDT…TALS), 331–393 (MPDA…SDNV), 488–508 (IKEP…METD), 604–656 (SSNA…KLLD), 671–743 (ALKE…EKKN), 774–811 (LTES…SECG), and 938–968 (IEEV…TLSS). A compositionally biased stretch (pro residues) spans 338–354 (IPPPPATLPPSPPPPSP). Residues 355 to 365 (SSFNSPKSPAP) show a composition bias toward low complexity. A compositionally biased stretch (polar residues) spans 375–384 (FTQNSGTKSP). A compositionally biased stretch (low complexity) spans 492 to 504 (STSSSGKSSQGSS). A compositionally biased stretch (polar residues) spans 604-623 (SSNAFTNNDSSHQGDVSNAR). Residues 719–743 (KRQETESKHEPDSSKEEKRQGEKKN) are compositionally biased toward basic and acidic residues. Over residues 941-952 (VDSRSGSDHHLE) the composition is skewed to basic and acidic residues. Positions 953–968 (TTSTISTVSSISTLSS) are enriched in low complexity. Positions 991 to 997 (PPVPPKP) match the SH3-binding motif. The segment at 1087–1115 (TKTGEGLDSPTGMKTASLSTRGTDALSTV) is disordered. Residues 1098–1115 (GMKTASLSTRGTDALSTV) are compositionally biased toward polar residues. Residues 1229–1292 (WTKQDVAEWL…ERALKQLLDR (64 aa)) form the SAM domain.

This sequence belongs to the SHANK family.

It localises to the cytoplasm. The protein localises to the synapse. Its subcellular location is the postsynaptic density. Its function is as follows. Seems to be an adapter protein in the postsynaptic density (PSD) of excitatory synapses that interconnects receptors of the postsynaptic membrane including NMDA-type and metabotropic glutamate receptors, and the actin-based cytoskeleton. May play a role in the structural and functional organization of the dendritic spine and synaptic junction. The polypeptide is SH3 and multiple ankyrin repeat domains protein 2 (shank2) (Xenopus laevis (African clawed frog)).